Reading from the N-terminus, the 457-residue chain is Acetylcholine receptor subunit alpha (457 aa).

A signal peptide spans 1-20; that stretch reads MELTAVLLLLGLCSAGTVLG. Over 21–230 the chain is Extracellular; the sequence is SEHETRLVAK…ITYHFVMQRL (210 aa). Intrachain disulfides connect C148–C162 and C212–C213. The N-linked (GlcNAc...) asparagine glycan is linked to N161. Transmembrane regions (helical) follow at residues 231–255, 263–281, and 297–316; these read PLYF…VFYL, MTLS…LVIV, and YMLF…VIVI. Residues 317-428 are Cytoplasmic-facing; it reads NTHHRSPSTH…WKYVAMVMDH (112 aa). Residues 429-447 traverse the membrane as a helical segment; sequence ILLGVFMLVCLIGTLAVFA.

It belongs to the ligand-gated ion channel (TC 1.A.9) family. Acetylcholine receptor (TC 1.A.9.1) subfamily. Alpha-1/CHRNA1 sub-subfamily. One of the alpha chains that assemble within the acetylcholine receptor, a pentamer of two alpha chains, a beta, a delta, and a gamma (in immature muscle) or epsilon (in mature muscle) chains. The muscle heteropentamer composed of alpha-1, beta-1, delta, epsilon subunits interacts with the alpha-conotoxin ImII.

The protein resides in the postsynaptic cell membrane. It localises to the cell membrane. It carries out the reaction K(+)(in) = K(+)(out). It catalyses the reaction Na(+)(in) = Na(+)(out). Upon acetylcholine binding, the AChR responds by an extensive change in conformation that affects all subunits and leads to opening of an ion-conducting channel across the plasma membrane. The sequence is that of Acetylcholine receptor subunit alpha (Chrna1) from Rattus norvegicus (Rat).